The primary structure comprises 445 residues: Exodeoxyribonuclease 7 large subunit (445 aa).

Belongs to the XseA family. In terms of assembly, heterooligomer composed of large and small subunits.

Its subcellular location is the cytoplasm. It catalyses the reaction Exonucleolytic cleavage in either 5'- to 3'- or 3'- to 5'-direction to yield nucleoside 5'-phosphates.. Its function is as follows. Bidirectionally degrades single-stranded DNA into large acid-insoluble oligonucleotides, which are then degraded further into small acid-soluble oligonucleotides. The chain is Exodeoxyribonuclease 7 large subunit from Staphylococcus aureus (strain bovine RF122 / ET3-1).